We begin with the raw amino-acid sequence, 176 residues long: Pituitary adenylate cyclase-activating polypeptide (176 aa).

An N-terminal signal peptide occupies residues 1–24 (MTMCSGARLALLVYGILMHSSVYG). The propeptide occupies 25–80 (SPAASGLRFPGIRPENEAYDEDGNPQQDFYDSEPPGVGSPASALRDAYALYYPAEE). Disordered stretches follow at residues 36 to 62 (IRPENEAYDEDGNPQQDFYDSEPPGVG) and 115 to 134 (GTPGGGADDDSEPLSKRHSD). An important for receptor binding region spans residues 150–158 (VKKYLAAVL). Position 158 is a leucine amide (Leu158). The residue at position 169 (Lys169) is a Lysine amide. Residues 173 to 176 (IPYL) constitute a propeptide that is removed on maturation.

Belongs to the glucagon family.

The protein localises to the secreted. Its function is as follows. PACAP is a neuropeptide involved in diverse array of physiological processes through activating the PACAP subfamily of class B1 G protein-coupled receptors: VIP receptor 1 (VIPR1), VIP receptor 2 (VIPR2), and PACAP type I receptor (ADCYAP1R1). Exerts neuroprotective and general cytoprotective effects due to anti-apoptotic, anti-inflammatory, and antioxidant actions. Promotes neuron projection development through the RAPGEF2/Rap1/B-Raf/ERK pathway. In chromaffin cells, induces long-lasting increase of intracellular calcium concentrations and neuroendocrine secretion. Involved in the control of glucose homeostasis, induces insulin secretion by pancreatic beta cells. PACAP exists in two bioactive forms from proteolysis of the same precursor protein, PACAP27 and PACAP38, which differ by eleven amino acid residues in the C-terminus. In Ovis aries (Sheep), this protein is Pituitary adenylate cyclase-activating polypeptide (ADCYAP1).